Reading from the N-terminus, the 364-residue chain is Dihydroorotase (364 aa).

Zn(2+)-binding residues include histidine 14, histidine 16, lysine 98, histidine 137, histidine 180, and aspartate 258. At lysine 98 the chain carries N6-carboxylysine.

Belongs to the metallo-dependent hydrolases superfamily. DHOase family. Class II DHOase subfamily. It depends on Zn(2+) as a cofactor.

It catalyses the reaction (S)-dihydroorotate + H2O = N-carbamoyl-L-aspartate + H(+). It participates in pyrimidine metabolism; UMP biosynthesis via de novo pathway; (S)-dihydroorotate from bicarbonate: step 3/3. Functionally, catalyzes the conversion of ureidosuccinic acid (USA) to dihydroorotate, the third step of the de novo pyrimidine biosynthetic pathway. The protein is Dihydroorotase (URA4) of Saccharomyces cerevisiae (strain ATCC 204508 / S288c) (Baker's yeast).